Reading from the N-terminus, the 197-residue chain is ATP-dependent Clp protease proteolytic subunit 2 (197 aa).

Residue S97 is the Nucleophile of the active site. Residue H122 is part of the active site.

This sequence belongs to the peptidase S14 family. Fourteen ClpP subunits assemble into 2 heptameric rings which stack back to back to give a disk-like structure with a central cavity, resembling the structure of eukaryotic proteasomes.

The protein localises to the cytoplasm. The enzyme catalyses Hydrolysis of proteins to small peptides in the presence of ATP and magnesium. alpha-casein is the usual test substrate. In the absence of ATP, only oligopeptides shorter than five residues are hydrolyzed (such as succinyl-Leu-Tyr-|-NHMec, and Leu-Tyr-Leu-|-Tyr-Trp, in which cleavage of the -Tyr-|-Leu- and -Tyr-|-Trp bonds also occurs).. Cleaves peptides in various proteins in a process that requires ATP hydrolysis. Has a chymotrypsin-like activity. Plays a major role in the degradation of misfolded proteins. The polypeptide is ATP-dependent Clp protease proteolytic subunit 2 (Leptospira interrogans serogroup Icterohaemorrhagiae serovar copenhageni (strain Fiocruz L1-130)).